Reading from the N-terminus, the 270-residue chain is 4-hydroxy-tetrahydrodipicolinate reductase (270 aa).

Residues 9-14 (GAGGRM) and Glu-35 each bind NAD(+). Arg-36 contributes to the NADP(+) binding site. NAD(+) is bound by residues 99–101 (GTT) and 123–126 (ASNF). His-156 (proton donor/acceptor) is an active-site residue. His-157 contributes to the (S)-2,3,4,5-tetrahydrodipicolinate binding site. Lys-160 serves as the catalytic Proton donor. 166–167 (GT) is a (S)-2,3,4,5-tetrahydrodipicolinate binding site.

Belongs to the DapB family.

Its subcellular location is the cytoplasm. It catalyses the reaction (S)-2,3,4,5-tetrahydrodipicolinate + NAD(+) + H2O = (2S,4S)-4-hydroxy-2,3,4,5-tetrahydrodipicolinate + NADH + H(+). It carries out the reaction (S)-2,3,4,5-tetrahydrodipicolinate + NADP(+) + H2O = (2S,4S)-4-hydroxy-2,3,4,5-tetrahydrodipicolinate + NADPH + H(+). It participates in amino-acid biosynthesis; L-lysine biosynthesis via DAP pathway; (S)-tetrahydrodipicolinate from L-aspartate: step 4/4. Its function is as follows. Catalyzes the conversion of 4-hydroxy-tetrahydrodipicolinate (HTPA) to tetrahydrodipicolinate. The sequence is that of 4-hydroxy-tetrahydrodipicolinate reductase from Haemophilus influenzae (strain PittEE).